A 357-amino-acid polypeptide reads, in one-letter code: S-adenosylmethionine decarboxylase proenzyme (357 aa).

Residues Glu11 and Glu14 contribute to the active site. Residue Ser71 is the Schiff-base intermediate with substrate; via pyruvic acid of the active site. A Pyruvic acid (Ser); by autocatalysis modification is found at Ser71. The Proton donor; for catalytic activity role is filled by Cys85. Active-site proton acceptor; for processing activity residues include Ser234 and His247.

The protein belongs to the eukaryotic AdoMetDC family. Requires pyruvate as cofactor. In terms of processing, is synthesized initially as an inactive proenzyme. Formation of the active enzyme involves a self-maturation process in which the active site pyruvoyl group is generated from an internal serine residue via an autocatalytic post-translational modification. Two non-identical subunits are generated from the proenzyme in this reaction, and the pyruvate is formed at the N-terminus of the alpha chain, which is derived from the carboxyl end of the proenzyme. The post-translation cleavage follows an unusual pathway, termed non-hydrolytic serinolysis, in which the side chain hydroxyl group of the serine supplies its oxygen atom to form the C-terminus of the beta chain, while the remainder of the serine residue undergoes an oxidative deamination to produce ammonia and the pyruvoyl group blocking the N-terminus of the alpha chain.

It catalyses the reaction S-adenosyl-L-methionine + H(+) = S-adenosyl 3-(methylsulfanyl)propylamine + CO2. The protein operates within amine and polyamine biosynthesis; S-adenosylmethioninamine biosynthesis; S-adenosylmethioninamine from S-adenosyl-L-methionine: step 1/1. The polypeptide is S-adenosylmethionine decarboxylase proenzyme (SAMDC) (Catharanthus roseus (Madagascar periwinkle)).